Consider the following 408-residue polypeptide: ATP phosphoribosyltransferase regulatory subunit (408 aa).

It belongs to the class-II aminoacyl-tRNA synthetase family. HisZ subfamily. Heteromultimer composed of HisG and HisZ subunits.

The protein localises to the cytoplasm. It participates in amino-acid biosynthesis; L-histidine biosynthesis; L-histidine from 5-phospho-alpha-D-ribose 1-diphosphate: step 1/9. In terms of biological role, required for the first step of histidine biosynthesis. May allow the feedback regulation of ATP phosphoribosyltransferase activity by histidine. The chain is ATP phosphoribosyltransferase regulatory subunit from Gloeothece citriformis (strain PCC 7424) (Cyanothece sp. (strain PCC 7424)).